Here is a 265-residue protein sequence, read N- to C-terminus: Hydroxyethylthiazole kinase (265 aa).

M41 lines the substrate pocket. ATP is bound by residues R117 and S163. Substrate is bound at residue G190.

The protein belongs to the Thz kinase family. Requires Mg(2+) as cofactor.

The catalysed reaction is 5-(2-hydroxyethyl)-4-methylthiazole + ATP = 4-methyl-5-(2-phosphooxyethyl)-thiazole + ADP + H(+). Its pathway is cofactor biosynthesis; thiamine diphosphate biosynthesis; 4-methyl-5-(2-phosphoethyl)-thiazole from 5-(2-hydroxyethyl)-4-methylthiazole: step 1/1. In terms of biological role, catalyzes the phosphorylation of the hydroxyl group of 4-methyl-5-beta-hydroxyethylthiazole (THZ). The protein is Hydroxyethylthiazole kinase of Pediococcus pentosaceus (strain ATCC 25745 / CCUG 21536 / LMG 10740 / 183-1w).